The chain runs to 474 residues: Sporulation-specific protein 6 (474 aa).

The BRCT domain maps to 125–178 (RLAFPNFIFYFDNVDEEIKRRVTQKINNLGAKVATLFTFEVTHFITTRTTDPEM). The segment at 421-470 (IETKSGYCENCCERYKDLERHLGGKHHRRFAEKDENFQGLDDLFLLIRRP) adopts a DBF4-type zinc-finger fold. The Zn(2+) site is built by Cys-428, Cys-431, His-441, and His-447.

The protein resides in the nucleus. In terms of biological role, may act as a kinase regulator. Essential for progression of meiosis II and sporulation. This chain is Sporulation-specific protein 6 (spo6), found in Schizosaccharomyces pombe (strain 972 / ATCC 24843) (Fission yeast).